The sequence spans 477 residues: Trigger factor (477 aa).

The 86-residue stretch at 169 to 254 (EDRVTIDYLG…VKEVAKPNEL (86 aa)) folds into the PPIase FKBP-type domain. Residues 435 to 477 (VSKEELTAEDEDAASEAKPAKKAAPKKKAAPKKKADEGKSEEA) are disordered. Residues 454 to 466 (AKKAAPKKKAAPK) are compositionally biased toward basic residues. Residues 467 to 477 (KKADEGKSEEA) show a composition bias toward basic and acidic residues.

Belongs to the FKBP-type PPIase family. Tig subfamily.

It is found in the cytoplasm. It catalyses the reaction [protein]-peptidylproline (omega=180) = [protein]-peptidylproline (omega=0). Functionally, involved in protein export. Acts as a chaperone by maintaining the newly synthesized protein in an open conformation. Functions as a peptidyl-prolyl cis-trans isomerase. This is Trigger factor from Brucella anthropi (strain ATCC 49188 / DSM 6882 / CCUG 24695 / JCM 21032 / LMG 3331 / NBRC 15819 / NCTC 12168 / Alc 37) (Ochrobactrum anthropi).